The following is a 143-amino-acid chain: Type II secretion system core protein G (143 aa).

Positions 1–8 (MQKRRQSG) are cleaved as a propeptide — leader sequence. Phenylalanine 9 bears the N-methylphenylalanine mark. A helical membrane pass occupies residues 9 to 29 (FTLLEVMVVIVILGILASLVV). Residues 70–92 (QGLDALVNKPTAAPEPRSYRDGG) are disordered.

This sequence belongs to the GSP G family. As to quaternary structure, type II secretion system is composed of four main components: the outer membrane complex, the inner membrane complex, the cytoplasmic secretion ATPase and the periplasm-spanning pseudopilus. Forms homomultimers. In terms of processing, cleaved by the prepilin peptidase. Post-translationally, methylated by prepilin peptidase at the amino group of the N-terminal phenylalanine once the leader sequence is cleaved.

Its subcellular location is the cell inner membrane. Core component of the type II secretion system required for the energy-dependent secretion of extracellular factors such as proteases and toxins from the periplasm. Pseudopilin (pilin-like) protein that polymerizes to form the pseudopilus. Further polymerization triggers pseudopilus growth. The chain is Type II secretion system core protein G (exeG) from Aeromonas hydrophila.